The primary structure comprises 337 residues: 5-formaminoimidazole-4-carboxamide-1-(beta)-D-ribofuranosyl 5'-monophosphate synthetase (337 aa).

The 5-amino-1-(5-phospho-beta-D-ribosyl)imidazole-4-carboxamide site is built by His-9 and Ser-73. The region spanning 94–324 is the ATP-grasp domain; that stretch reads KKIFEWEADQ…IGRRIAREIR (231 aa). ATP-binding positions include 124–184 and Glu-206; that span reads PEDV…VPMY. Asn-234 contacts 5-amino-1-(5-phospho-beta-D-ribosyl)imidazole-4-carboxamide. The Mg(2+) site is built by Glu-273 and Glu-286.

This sequence belongs to the phosphohexose mutase family. It depends on Mg(2+) as a cofactor. Requires Mn(2+) as cofactor.

The enzyme catalyses 5-amino-1-(5-phospho-beta-D-ribosyl)imidazole-4-carboxamide + formate + ATP = 5-formamido-1-(5-phospho-D-ribosyl)imidazole-4-carboxamide + ADP + phosphate. It participates in purine metabolism; IMP biosynthesis via de novo pathway; 5-formamido-1-(5-phospho-D-ribosyl)imidazole-4-carboxamide from 5-amino-1-(5-phospho-D-ribosyl)imidazole-4-carboxamide (formate route): step 1/1. Its function is as follows. Catalyzes the ATP- and formate-dependent formylation of 5-aminoimidazole-4-carboxamide-1-beta-d-ribofuranosyl 5'-monophosphate (AICAR) to 5-formaminoimidazole-4-carboxamide-1-beta-d-ribofuranosyl 5'-monophosphate (FAICAR) in the absence of folates. The protein is 5-formaminoimidazole-4-carboxamide-1-(beta)-D-ribofuranosyl 5'-monophosphate synthetase of Saccharolobus solfataricus (strain ATCC 35092 / DSM 1617 / JCM 11322 / P2) (Sulfolobus solfataricus).